A 104-amino-acid chain; its full sequence is Nucleoid-associated protein EF_2780 (104 aa).

The protein belongs to the YbaB/EbfC family. In terms of assembly, homodimer.

The protein resides in the cytoplasm. It is found in the nucleoid. Binds to DNA and alters its conformation. May be involved in regulation of gene expression, nucleoid organization and DNA protection. The protein is Nucleoid-associated protein EF_2780 of Enterococcus faecalis (strain ATCC 700802 / V583).